Here is a 326-residue protein sequence, read N- to C-terminus: Acetyl-coenzyme A carboxylase carboxyl transferase subunit alpha (326 aa).

Residues 44 to 298 (KLETRAMQLR…KQALLDNLDE (255 aa)) enclose the CoA carboxyltransferase C-terminal domain.

It belongs to the AccA family. As to quaternary structure, acetyl-CoA carboxylase is a heterohexamer composed of biotin carboxyl carrier protein (AccB), biotin carboxylase (AccC) and two subunits each of ACCase subunit alpha (AccA) and ACCase subunit beta (AccD).

It is found in the cytoplasm. The catalysed reaction is N(6)-carboxybiotinyl-L-lysyl-[protein] + acetyl-CoA = N(6)-biotinyl-L-lysyl-[protein] + malonyl-CoA. It functions in the pathway lipid metabolism; malonyl-CoA biosynthesis; malonyl-CoA from acetyl-CoA: step 1/1. Component of the acetyl coenzyme A carboxylase (ACC) complex. First, biotin carboxylase catalyzes the carboxylation of biotin on its carrier protein (BCCP) and then the CO(2) group is transferred by the carboxyltransferase to acetyl-CoA to form malonyl-CoA. In Trichormus variabilis (strain ATCC 29413 / PCC 7937) (Anabaena variabilis), this protein is Acetyl-coenzyme A carboxylase carboxyl transferase subunit alpha.